The following is a 154-amino-acid chain: Ribonuclease 8 (154 aa).

An N-terminal signal peptide occupies residues 1 to 27; that stretch reads MAPARAGCCPLLLLLLGLWVAEVLVRA. The active-site Proton acceptor is H42. 4 disulfide bridges follow: C50/C93, C64/C118, C82/C133, and C89/C96. Substrate contacts are provided by residues 65–69 and K90; that span reads KDLNT. Catalysis depends on H149, which acts as the Proton donor.

This sequence belongs to the pancreatic ribonuclease family. In terms of tissue distribution, expressed prominently in the placenta and is not detected in any other tissues examined.

It localises to the secreted. In terms of biological role, has a low ribonuclease activity. The polypeptide is Ribonuclease 8 (RNASE8) (Homo sapiens (Human)).